Here is a 126-residue protein sequence, read N- to C-terminus: Nucleoside diphosphate kinase B (126 aa).

5 residues coordinate ATP: lysine 6, phenylalanine 37, threonine 68, arginine 79, and asparagine 89. Histidine 92 acts as the Pros-phosphohistidine intermediate in catalysis.

The protein belongs to the NDK family. It depends on Mg(2+) as a cofactor.

It localises to the cytoplasm. It is found in the nucleus. Its subcellular location is the cell projection. The protein resides in the lamellipodium. The protein localises to the ruffle. The enzyme catalyses a 2'-deoxyribonucleoside 5'-diphosphate + ATP = a 2'-deoxyribonucleoside 5'-triphosphate + ADP. It carries out the reaction a ribonucleoside 5'-diphosphate + ATP = a ribonucleoside 5'-triphosphate + ADP. Its function is as follows. Major role in the synthesis of nucleoside triphosphates other than ATP. The sequence is that of Nucleoside diphosphate kinase B (nme2) from Merluccius capensis (Shallow-water Cape hake).